Here is a 196-residue protein sequence, read N- to C-terminus: Holliday junction branch migration complex subunit RuvA (196 aa).

Positions 1-69 are domain I; sequence MIVGLRGTII…EDAHLLFGFC (69 aa). The interval 70-148 is domain II; the sequence is EEIEKQTFER…QLLQSQEESI (79 aa). Residues 149–157 are flexible linker; the sequence is APSNNLKYE. Positions 157 to 196 are domain III; sequence EASLALQSLGFKRNEIQKVLEHIEALSVSEIVKEALKRLA.

Belongs to the RuvA family. As to quaternary structure, homotetramer. Forms an RuvA(8)-RuvB(12)-Holliday junction (HJ) complex. HJ DNA is sandwiched between 2 RuvA tetramers; dsDNA enters through RuvA and exits via RuvB. An RuvB hexamer assembles on each DNA strand where it exits the tetramer. Each RuvB hexamer is contacted by two RuvA subunits (via domain III) on 2 adjacent RuvB subunits; this complex drives branch migration. In the full resolvosome a probable DNA-RuvA(4)-RuvB(12)-RuvC(2) complex forms which resolves the HJ.

Its subcellular location is the cytoplasm. Functionally, the RuvA-RuvB-RuvC complex processes Holliday junction (HJ) DNA during genetic recombination and DNA repair, while the RuvA-RuvB complex plays an important role in the rescue of blocked DNA replication forks via replication fork reversal (RFR). RuvA specifically binds to HJ cruciform DNA, conferring on it an open structure. The RuvB hexamer acts as an ATP-dependent pump, pulling dsDNA into and through the RuvAB complex. HJ branch migration allows RuvC to scan DNA until it finds its consensus sequence, where it cleaves and resolves the cruciform DNA. This is Holliday junction branch migration complex subunit RuvA from Helicobacter hepaticus (strain ATCC 51449 / 3B1).